The primary structure comprises 283 residues: U3 small nucleolar ribonucleoprotein protein IMP4 (283 aa).

Residues 79 to 260 form the Brix domain; it reads PKVIVTTSRD…LYELTLGTLE (182 aa).

As to quaternary structure, component of a heterotrimeric complex containing IMP3, IMP4 and MPP10.

It is found in the nucleus. It localises to the nucleolus. Functionally, component of the U3 small nucleolar ribonucleoprotein. Required for the early cleavages at sites A0, A1 and A2 during 18S ribosomal pre-RNA processing. The chain is U3 small nucleolar ribonucleoprotein protein IMP4 (IMP4) from Eremothecium gossypii (strain ATCC 10895 / CBS 109.51 / FGSC 9923 / NRRL Y-1056) (Yeast).